A 570-amino-acid chain; its full sequence is Putative periplasmic trehalase (570 aa).

The signal sequence occupies residues M1–A34. Residues R159, W166–D167, N203, R212–Q214, R284–E286, and G317 contribute to the substrate site. Active-site proton donor/acceptor residues include D319 and E503. Residue E518 participates in substrate binding. Positions K544–Q570 are disordered. Residues P554–Q570 are compositionally biased toward low complexity.

This sequence belongs to the glycosyl hydrolase 37 family. As to quaternary structure, monomer.

It localises to the periplasm. It carries out the reaction alpha,alpha-trehalose + H2O = alpha-D-glucose + beta-D-glucose. In terms of biological role, provides the cells with the ability to utilize trehalose at high osmolarity by splitting it into glucose molecules that can subsequently be taken up by the phosphotransferase-mediated uptake system. This is Putative periplasmic trehalase from Salmonella typhi.